The following is a 386-amino-acid chain: Cell division protein FtsZ (386 aa).

Residues 21–25 (GGGGN), 108–110 (GTG), E139, R143, and N187 contribute to the GTP site.

This sequence belongs to the FtsZ family. As to quaternary structure, homodimer. Polymerizes to form a dynamic ring structure in a strictly GTP-dependent manner. Interacts directly with several other division proteins.

Its subcellular location is the cytoplasm. Functionally, essential cell division protein that forms a contractile ring structure (Z ring) at the future cell division site. The regulation of the ring assembly controls the timing and the location of cell division. One of the functions of the FtsZ ring is to recruit other cell division proteins to the septum to produce a new cell wall between the dividing cells. Binds GTP and shows GTPase activity. The sequence is that of Cell division protein FtsZ from Coxiella burnetii (strain RSA 493 / Nine Mile phase I).